The chain runs to 152 residues: Aspartate 1-decarboxylase (152 aa).

The Schiff-base intermediate with substrate; via pyruvic acid role is filled by serine 24. Residue serine 24 is modified to Pyruvic acid (Ser). Threonine 56 is a binding site for substrate. Residue tyrosine 57 is the Proton donor of the active site. A substrate-binding site is contributed by 72-74 (GAA).

Belongs to the PanD family. As to quaternary structure, heterooctamer of four alpha and four beta subunits. The cofactor is pyruvate. Is synthesized initially as an inactive proenzyme, which is activated by self-cleavage at a specific serine bond to produce a beta-subunit with a hydroxyl group at its C-terminus and an alpha-subunit with a pyruvoyl group at its N-terminus.

The protein resides in the cytoplasm. It carries out the reaction L-aspartate + H(+) = beta-alanine + CO2. Its pathway is cofactor biosynthesis; (R)-pantothenate biosynthesis; beta-alanine from L-aspartate: step 1/1. In terms of biological role, catalyzes the pyruvoyl-dependent decarboxylation of aspartate to produce beta-alanine. The sequence is that of Aspartate 1-decarboxylase from Methylobacterium nodulans (strain LMG 21967 / CNCM I-2342 / ORS 2060).